A 288-amino-acid polypeptide reads, in one-letter code: Phenazine biosynthesis-like domain-containing protein (288 aa).

Glu-46 is an active-site residue.

The protein belongs to the PhzF family. Interacts with UNRIP/MAWD.

This is Phenazine biosynthesis-like domain-containing protein (PBLD) from Pongo abelii (Sumatran orangutan).